Consider the following 202-residue polypeptide: LexA repressor (202 aa).

Positions arginine 28–lysine 48 form a DNA-binding region, H-T-H motif. Residues serine 119 and lysine 156 each act as for autocatalytic cleavage activity in the active site.

The protein belongs to the peptidase S24 family. Homodimer.

The catalysed reaction is Hydrolysis of Ala-|-Gly bond in repressor LexA.. In terms of biological role, represses a number of genes involved in the response to DNA damage (SOS response), including recA and lexA. Binds to the 16 bp palindromic sequence 5'-CTGTATATATATACAG-3'. In the presence of single-stranded DNA, RecA interacts with LexA causing an autocatalytic cleavage which disrupts the DNA-binding part of LexA, leading to derepression of the SOS regulon and eventually DNA repair. This chain is LexA repressor, found in Pectobacterium carotovorum subsp. carotovorum (strain PC1).